Here is a 201-residue protein sequence, read N- to C-terminus: Potassium-transporting ATPase KdpC subunit (201 aa).

Residues isoleucine 13 to isoleucine 33 form a helical membrane-spanning segment.

The protein belongs to the KdpC family. The system is composed of three essential subunits: KdpA, KdpB and KdpC.

The protein resides in the cell membrane. Functionally, part of the high-affinity ATP-driven potassium transport (or Kdp) system, which catalyzes the hydrolysis of ATP coupled with the electrogenic transport of potassium into the cytoplasm. This subunit acts as a catalytic chaperone that increases the ATP-binding affinity of the ATP-hydrolyzing subunit KdpB by the formation of a transient KdpB/KdpC/ATP ternary complex. The chain is Potassium-transporting ATPase KdpC subunit from Clostridium botulinum (strain Eklund 17B / Type B).